Consider the following 320-residue polypeptide: Mitochondrial glutamate carrier 2 (320 aa).

3 Solcar repeats span residues 11–97, 105–215, and 224–313; these read LSIT…LRQL, RNLK…LNQL, and ASFT…GIGE. 3 consecutive transmembrane segments (helical) span residues 17–37, 66–86, and 111–131; these read LINGGIAGLVGVTCVFPIDLA, FLGMYRGAAVNLTLVTPEKAI, and MLAGCGAGICQVVITCPMEML. Position 150 is a phosphoserine (Ser150). Helical transmembrane passes span 190–210, 230–250, and 293–313; these read GLGATLLRDIPFSIIYFPLFA, FVAGCAAGSVSAVAVTPLDVL, and ALVIAPLFGIAQGVYFIGIGE.

The protein belongs to the mitochondrial carrier (TC 2.A.29) family.

It is found in the mitochondrion inner membrane. The enzyme catalyses L-glutamate(in) + H(+)(in) = L-glutamate(out) + H(+)(out). In terms of biological role, responsible for the transport of glutamate from the cytosol into the mitochondrial matrix with the concomitant import of a proton (symport system). This chain is Mitochondrial glutamate carrier 2 (Slc25a18), found in Rattus norvegicus (Rat).